The chain runs to 310 residues: Protoheme IX farnesyltransferase (310 aa).

The next 9 helical transmembrane spans lie at 31 to 51 (VMSL…DSIH), 52 to 72 (PLIA…AGAM), 102 to 119 (ALSF…FMAL), 123 to 145 (ILAS…IWLK), 151 to 171 (NIVI…AAVS), 179 to 199 (IILF…IALF), 225 to 245 (ILIY…IGMN), 248 to 268 (IYLI…FSLF), and 281 to 301 (FTYS…TSTI).

It belongs to the UbiA prenyltransferase family. Protoheme IX farnesyltransferase subfamily.

The protein resides in the cell inner membrane. It carries out the reaction heme b + (2E,6E)-farnesyl diphosphate + H2O = Fe(II)-heme o + diphosphate. The protein operates within porphyrin-containing compound metabolism; heme O biosynthesis; heme O from protoheme: step 1/1. Functionally, converts heme B (protoheme IX) to heme O by substitution of the vinyl group on carbon 2 of heme B porphyrin ring with a hydroxyethyl farnesyl side group. In Rickettsia prowazekii (strain Madrid E), this protein is Protoheme IX farnesyltransferase.